The chain runs to 349 residues: tRNA N6-adenosine threonylcarbamoyltransferase (349 aa).

Fe cation is bound by residues H116 and H120. Residues 139–143 (LVSGG), D172, G185, and N283 contribute to the substrate site. Residue D311 participates in Fe cation binding.

Belongs to the KAE1 / TsaD family. The cofactor is Fe(2+).

It localises to the cytoplasm. The catalysed reaction is L-threonylcarbamoyladenylate + adenosine(37) in tRNA = N(6)-L-threonylcarbamoyladenosine(37) in tRNA + AMP + H(+). Its function is as follows. Required for the formation of a threonylcarbamoyl group on adenosine at position 37 (t(6)A37) in tRNAs that read codons beginning with adenine. Is involved in the transfer of the threonylcarbamoyl moiety of threonylcarbamoyl-AMP (TC-AMP) to the N6 group of A37, together with TsaE and TsaB. TsaD likely plays a direct catalytic role in this reaction. The protein is tRNA N6-adenosine threonylcarbamoyltransferase of Colwellia psychrerythraea (strain 34H / ATCC BAA-681) (Vibrio psychroerythus).